Consider the following 187-residue polypeptide: UPF0301 protein ESA_00394 (187 aa).

Belongs to the UPF0301 (AlgH) family.

This is UPF0301 protein ESA_00394 from Cronobacter sakazakii (strain ATCC BAA-894) (Enterobacter sakazakii).